The sequence spans 517 residues: B3 domain-containing protein REM1 (517 aa).

Positions F7 to S92 form a DNA-binding region, TF-B3 1. The segment covering D115–I140 has biased composition (acidic residues). The segment at D115–D158 is disordered. Over residues I143–S157 the composition is skewed to basic and acidic residues. DNA-binding regions (TF-B3) lie at residues F162–E259 and F285–K385. Residues G393–K415 form a disordered region.

In terms of tissue distribution, expressed in the shoot apical meristem (SAM), in the inflorescence apex and flowers.

It localises to the nucleus. Functionally, may play a role in flower development. This is B3 domain-containing protein REM1 (REM1) from Arabidopsis thaliana (Mouse-ear cress).